A 141-amino-acid chain; its full sequence is Large ribosomal subunit protein bL17 (141 aa).

Belongs to the bacterial ribosomal protein bL17 family. Part of the 50S ribosomal subunit. Contacts protein L32.

The polypeptide is Large ribosomal subunit protein bL17 (Gluconacetobacter diazotrophicus (strain ATCC 49037 / DSM 5601 / CCUG 37298 / CIP 103539 / LMG 7603 / PAl5)).